The sequence spans 436 residues: 3-ketoacyl-CoA thiolase (436 aa).

The active-site Acyl-thioester intermediate is the C99. Catalysis depends on proton acceptor residues H392 and C422.

The protein belongs to the thiolase-like superfamily. Thiolase family. In terms of assembly, heterotetramer of two alpha chains (FadJ) and two beta chains (FadI).

It localises to the cytoplasm. The enzyme catalyses an acyl-CoA + acetyl-CoA = a 3-oxoacyl-CoA + CoA. It functions in the pathway lipid metabolism; fatty acid beta-oxidation. Catalyzes the final step of fatty acid oxidation in which acetyl-CoA is released and the CoA ester of a fatty acid two carbons shorter is formed. This is 3-ketoacyl-CoA thiolase from Enterobacter sp. (strain 638).